The chain runs to 503 residues: Protein phosphatase eya-1 (503 aa).

Aspartate 237 functions as the Nucleophile in the catalytic mechanism. 2 residues coordinate Mg(2+): aspartate 237 and aspartate 239. Aspartate 239 functions as the Proton donor in the catalytic mechanism.

Belongs to the HAD-like hydrolase superfamily. EYA family. In terms of assembly, interacts (via C-terminus) with ceh-34 (via N-terminus). The cofactor is Mg(2+). Expressed in body wall muscles. Expressed in BAG sensory neurons and in other head neurons.

The protein resides in the nucleus. The catalysed reaction is O-phospho-L-tyrosyl-[protein] + H2O = L-tyrosyl-[protein] + phosphate. In terms of biological role, tyrosine protein phosphatase. Acts probably as a transcription regulator in the embryonic and postembryonic development of several tissues including pharynx, vulva and gonads. Required for the development of anterior tissues during late embryogenesis. Together with ceh-34, required to specify the coelomocyte fate in embryonic and postembryonic precursors. In the anterior part of the embryo, prevents apoptosis in cells that are not fated to die. Together with ceh-34 activates proapoptotic factor egl-1 expression to promote motor neuron M4 sister cell apoptosis. Also promotes apoptosis of I1 pharyngeal neuron sister cell. Plays a role in locomotion and fertility. May play a role in resistance to heat and oxidative stresses. May cooperate with the transcription factors vab-3 and ceh-32 to repress transcription factor ets-5 expression in non BAG neuronal cells. This Caenorhabditis elegans protein is Protein phosphatase eya-1.